Consider the following 122-residue polypeptide: MHKTSPHRNQRLADQIQRDLAELIPRELRSSSLGLITLQSIELTPDLAHAKVFFTVLGAEPEHALKALQEKAGYLYSLLFKRLHIHTVPTLHFHYDSSVEHGIEMSKLIDQAVESDQKDENK.

The protein belongs to the RbfA family. As to quaternary structure, monomer. Binds 30S ribosomal subunits, but not 50S ribosomal subunits or 70S ribosomes.

Its subcellular location is the cytoplasm. Its function is as follows. One of several proteins that assist in the late maturation steps of the functional core of the 30S ribosomal subunit. Associates with free 30S ribosomal subunits (but not with 30S subunits that are part of 70S ribosomes or polysomes). Required for efficient processing of 16S rRNA. May interact with the 5'-terminal helix region of 16S rRNA. The protein is Ribosome-binding factor A of Polynucleobacter necessarius subsp. necessarius (strain STIR1).